Reading from the N-terminus, the 256-residue chain is MKTIDLNCDLGEGFGAWEMGNDAAMIELASSVNVACGFHAGDPDIMRRTVELAKARGVSVGAHPGYRDLHGFGRHPIAGLKASEIENLVAYQIGALQAIATAAGHKVTHVKAHGALSNVACEDDMTAKAIAAGIKAVDPSLIFVVLANSKLVKAGEAANLPMVHEVFADRAYEDDGNLVSRKKPGAVLHDAKAIADRVVRMVQDGAVVSVTGKVIKMRTDTVCIHGDTHGAVEIARTLRQALKDAGIEVAPFKRGA.

The protein belongs to the LamB/PxpA family. In terms of assembly, forms a complex composed of PxpA, PxpB and PxpC.

The enzyme catalyses 5-oxo-L-proline + ATP + 2 H2O = L-glutamate + ADP + phosphate + H(+). Functionally, catalyzes the cleavage of 5-oxoproline to form L-glutamate coupled to the hydrolysis of ATP to ADP and inorganic phosphate. This chain is 5-oxoprolinase subunit A 2, found in Bradyrhizobium diazoefficiens (strain JCM 10833 / BCRC 13528 / IAM 13628 / NBRC 14792 / USDA 110).